Here is a 293-residue protein sequence, read N- to C-terminus: tRNA pseudouridine synthase B (293 aa).

Asp39 acts as the Nucleophile in catalysis.

It belongs to the pseudouridine synthase TruB family. Type 1 subfamily.

The catalysed reaction is uridine(55) in tRNA = pseudouridine(55) in tRNA. Its function is as follows. Responsible for synthesis of pseudouridine from uracil-55 in the psi GC loop of transfer RNAs. In Thermobifida fusca (strain YX), this protein is tRNA pseudouridine synthase B.